A 270-amino-acid chain; its full sequence is MLVVEGLTCRFGSKAAVDGASFSVERGSFVGVIGRSGAGKSTLLRMLNRLAEPSEGRILFEGIDVTALQGRELRQWRARSAMIFQQFNLIGRLDVLTNVLMGRLSEVPSWRSLVQMWPEQDRALAISALDQFDMASYAAQRADQLSGGQQQRVAIARALVQQPDIVLADEPIASLDPRNTKIVMDALLRINKHFGITVLCNLHSLDLARSYCDRLIGMASGRVVFDGAPAALTDQIARELYDLEADEVLGTASHVPHGLPAPALAGVAVA.

One can recognise an ABC transporter domain in the interval 2-245 (LVVEGLTCRF…IARELYDLEA (244 aa)). 34–41 (GRSGAGKS) provides a ligand contact to ATP.

This sequence belongs to the ABC transporter superfamily. Phosphonates importer (TC 3.A.1.9.1) family. As to quaternary structure, the complex is composed of two ATP-binding proteins (PhnC), two transmembrane proteins (PhnE) and a solute-binding protein (PhnD).

It is found in the cell inner membrane. The catalysed reaction is phosphonate(out) + ATP + H2O = phosphonate(in) + ADP + phosphate + H(+). Its function is as follows. Part of the ABC transporter complex PhnCDE involved in phosphonates import. Responsible for energy coupling to the transport system. The protein is Phosphonates import ATP-binding protein PhnC 1 of Rhodopseudomonas palustris (strain ATCC BAA-98 / CGA009).